Here is a 484-residue protein sequence, read N- to C-terminus: Probable cytochrome P450 555A1 (484 aa).

The chain crosses the membrane as a helical span at residues 1-21; sequence MIIIVIVVFLFYFSFLNLNLN. A heme-binding site is contributed by Cys432.

It belongs to the cytochrome P450 family. Requires heme as cofactor.

It is found in the membrane. The chain is Probable cytochrome P450 555A1 (cyp555A1) from Dictyostelium discoideum (Social amoeba).